The following is a 112-amino-acid chain: Putative pterin-4-alpha-carbinolamine dehydratase (112 aa).

This sequence belongs to the pterin-4-alpha-carbinolamine dehydratase family.

It carries out the reaction (4aS,6R)-4a-hydroxy-L-erythro-5,6,7,8-tetrahydrobiopterin = (6R)-L-erythro-6,7-dihydrobiopterin + H2O. The protein is Putative pterin-4-alpha-carbinolamine dehydratase of Shewanella baltica (strain OS155 / ATCC BAA-1091).